The chain runs to 964 residues: Collagen alpha-1(I) chain (964 aa).

Positions 1–964 are disordered; sequence GGISVPGPMG…PGPPGPPGPP (964 aa). 4-hydroxyproline occurs at positions 18, 21, 24, 33, 36, 39, 53, 68, 74, 83, and 89. Basic and acidic residues predominate over residues 56–70; sequence NGDDGEAGKPGRPGE. Position 92 is a 5-hydroxylysine; alternate (K92). A glycan (O-linked (Gal...) hydroxylysine; alternate) is linked at K92. The residue at position 98 (S98) is a Phosphoserine. Composition is skewed to low complexity over residues 106–117 and 126–144; these read DAGPAGPKQMGP and PGAS…TGAA. A 4-hydroxyproline mark is found at P126, P147, P156, P159, P186, P189, P201, P207, P216, P222, P225, and P240. The segment covering 146–158 has biased composition (pro residues); that stretch reads PPGPTGPAGPPGF. Low complexity predominate over residues 192–231; the sequence is AGAAGPAGNPGADGQPGAKGANGAPGIAGAPGFPGARGPS. Residue K243 is modified to 5-hydroxylysine. 4-hydroxyproline is present on residues P249, P252, P260, P269, P284, P290, P299, and P305. The segment covering 294-303 has biased composition (gly residues); that stretch reads GERGGPGSRG. K314 carries the 5-hydroxylysine modification. 4-hydroxyproline occurs at positions 323, 332, 338, 344, 353, 356, 365, 374, 379, 391, 400, 409, 412, 430, 447, 453, 459, 465, 471, 477, 489, 498, 510, and 519. Positions 347–373 are enriched in low complexity; sequence KGLTGSPGSPGPDGKTGPPGPAGQDGR. Positions 381–400 are enriched in low complexity; sequence ARGQAGVMGFPGPKGAAGEP. Over residues 459–468 the composition is skewed to low complexity; the sequence is PGEAGKPGEQ. Residue K531 is modified to 5-hydroxylysine. A 4-hydroxyproline mark is found at P537, P552, and P558. A compositionally biased stretch (low complexity) spans 564–578; the sequence is SGPSGPAGPTGARGA. Phosphoserine is present on S567. P579, P585, P588, P597, P603, P621, P630, and P639 each carry 4-hydroxyproline. The span at 591 to 618 shows a compositional bias: low complexity; sequence AGFAGPPGADGQPGAKGEPGDAGAKGDA. Residues 620–632 are compositionally biased toward pro residues; the sequence is PPGPAGPTGPPGP. K642 carries the post-translational modification 5-hydroxylysine. The span at 647-663 shows a compositional bias: low complexity; the sequence is SAGPPGATGFPGAAGRV. P651 and P657 each carry 4-hydroxyproline. P665 is modified (3-hydroxyproline). 15 positions are modified to 4-hydroxyproline: P666, P675, P678, P704, P712, P721, P739, P748, P751, P757, P772, P778, P784, P792, and P798. Low complexity predominate over residues 709 to 721; it reads KGSPGADGPAGAP. The span at 771 to 781 shows a compositional bias: pro residues; sequence PPGPMGPPGLA. 5-hydroxylysine is present on K807. Positions 815-830 are enriched in pro residues; that stretch reads PGPPGAPGAPGAPGPV. 3 positions are modified to 4-hydroxyproline: P818, P821, and P824. Over residues 850–864 the composition is skewed to low complexity; it reads AGPAGARGPAGPQGP. The segment covering 865 to 879 has biased composition (basic and acidic residues); it reads RGDKGETGEQGDRGI. K868 carries the 5-hydroxylysine modification. 5-hydroxylysine; alternate is present on K880. Residue K880 is glycosylated (O-linked (Gal...) hydroxylysine; alternate). A 4-hydroxyproline mark is found at P895, P898, P916, and P931. Low complexity predominate over residues 898–931; sequence PGEQGPSGASGPAGPRGPPGSAGSPGKDGLNGLP. P936 carries the 3-hydroxyproline modification. Residue P937 is modified to 4-hydroxyproline. Over residues 949–964 the composition is skewed to pro residues; sequence VGPPGPPGPPGPPGPP. At P951 the chain carries 3-hydroxyproline. P952 carries the post-translational modification 4-hydroxyproline. A 3-hydroxyproline modification is found at P954. P955 carries the post-translational modification 4-hydroxyproline. 3-hydroxyproline is present on P957. 4-hydroxyproline is present on residues P958, P961, and P964.

It belongs to the fibrillar collagen family. As to quaternary structure, trimers of one alpha 2(I) and two alpha 1(I) chains. Post-translationally, contains mostly 4-hydroxyproline. Proline residues at the third position of the tripeptide repeating unit (G-X-Y) are hydroxylated in some or all of the chains. In terms of processing, contains 3-hydroxyproline at a few sites. This modification occurs on the first proline residue in the sequence motif Gly-Pro-Hyp, where Hyp is 4-hydroxyproline. Lysine residues at the third position of the tripeptide repeating unit (G-X-Y) are 5-hydroxylated in some or all of the chains. Post-translationally, O-glycosylated on hydroxylated lysine residues. The O-linked glycan consists of a Glc-Gal disaccharide. As to expression, expressed in bones.

The protein localises to the secreted. The protein resides in the extracellular space. It is found in the extracellular matrix. Its function is as follows. Type I collagen is a member of group I collagen (fibrillar forming collagen). The chain is Collagen alpha-1(I) chain from Parocnus serus (Greater Haitian ground sloth).